A 449-amino-acid polypeptide reads, in one-letter code: Chromosomal replication initiator protein DnaA (449 aa).

The domain I, interacts with DnaA modulators stretch occupies residues 1–72; that stretch reads MPNLEELWAY…VEGVYEFAQL (72 aa). Positions 72–109 are domain II; sequence LEVDPVIMTKDELQPAPATDQRPAVEEDDQNLTFKAKT. The interval 110–326 is domain III, AAA+ region; it reads HLNPKYTFDR…GALVRVQAFS (217 aa). ATP is bound by residues glycine 154, glycine 156, lysine 157, and threonine 158. The interval 327-449 is domain IV, binds dsDNA; the sequence is TMKNEDITTS…ELRNILKNRG (123 aa).

It belongs to the DnaA family. As to quaternary structure, oligomerizes as a right-handed, spiral filament on DNA at oriC.

The protein resides in the cytoplasm. Its function is as follows. Plays an essential role in the initiation and regulation of chromosomal replication. ATP-DnaA binds to the origin of replication (oriC) to initiate formation of the DNA replication initiation complex once per cell cycle. Binds the DnaA box (a 9 base pair repeat at the origin) and separates the double-stranded (ds)DNA. Forms a right-handed helical filament on oriC DNA; dsDNA binds to the exterior of the filament while single-stranded (ss)DNA is stabiized in the filament's interior. The ATP-DnaA-oriC complex binds and stabilizes one strand of the AT-rich DNA unwinding element (DUE), permitting loading of DNA polymerase. After initiation quickly degrades to an ADP-DnaA complex that is not apt for DNA replication. Binds acidic phospholipids. This is Chromosomal replication initiator protein DnaA from Lacticaseibacillus casei (strain BL23) (Lactobacillus casei).